The following is a 359-amino-acid chain: DNA replication and repair protein RecF (359 aa).

ATP is bound at residue 30–37 (GPNGSGKT).

It belongs to the RecF family.

It is found in the cytoplasm. Functionally, the RecF protein is involved in DNA metabolism; it is required for DNA replication and normal SOS inducibility. RecF binds preferentially to single-stranded, linear DNA. It also seems to bind ATP. In Psychromonas ingrahamii (strain DSM 17664 / CCUG 51855 / 37), this protein is DNA replication and repair protein RecF.